The sequence spans 344 residues: Trace amine-associated receptor 8c (344 aa).

Residues 1–31 are Extracellular-facing; it reads MTSNFSQPALQLCYENTNGSCIKTPYSPGPR. N-linked (GlcNAc...) asparagine glycosylation is found at N4 and N18. Intrachain disulfides connect C21-C185 and C104-C189. Residues 32–52 form a helical membrane-spanning segment; sequence VILYMVYGFGAVLAVCGNLLV. The Cytoplasmic portion of the chain corresponds to 53-67; sequence VISVLHFKQLHSPAN. Residues 68-88 traverse the membrane as a helical segment; it reads FLIASLASADFLVGISVMPFS. The Extracellular segment spans residues 89-111; it reads MVRSIESCWYFGDAFCSLHSCCD. A helical membrane pass occupies residues 112 to 132; sequence VAFCYSSALHLCFISVDRYIA. Residues 133-146 lie on the Cytoplasmic side of the membrane; that stretch reads VTDPLVYPTKFTVS. The chain crosses the membrane as a helical span at residues 147 to 167; that stretch reads VSGICISISWILPLVYSSAVF. The Extracellular portion of the chain corresponds to 168-195; that stretch reads YTGISAKGIESLVSALNCVGGCQVVVNQ. A helical membrane pass occupies residues 196 to 216; that stretch reads DWVLISFLLFFIPTVVMIILY. Over 217–260 the chain is Cytoplasmic; that stretch reads SKIFLVAKQQAVKIETSVSGNRGESSSESHKARVAKRERKAAKT. A helical membrane pass occupies residues 261–281; that stretch reads LGVTVVAFMVSWLPYTIDALV. Residue D282 is a topological domain, extracellular. The chain crosses the membrane as a helical span at residues 283–303; the sequence is AFMGFITPAYVYEICCWSAYY. The Cytoplasmic portion of the chain corresponds to 304–344; sequence NSAMNPLIYAFFYPWFRKAIKLILSGKILKGHSSTTNLFSE.

Belongs to the G-protein coupled receptor 1 family. In terms of tissue distribution, specifically expressed in neurons of the olfactory epithelium.

Its subcellular location is the cell membrane. In terms of biological role, olfactory receptor specific for trace amines, such ascyclohexylamine (1-MPD). Trace amine compounds are enriched in animal body fluids and act on trace amine-associated receptors (TAARs) to elicit both intraspecific and interspecific innate behaviors. Ligand-binding causes a conformation change that triggers signaling via G(s)-class of G alpha proteins (GNAL or GNAS). The protein is Trace amine-associated receptor 8c of Mus musculus (Mouse).